Here is a 398-residue protein sequence, read N- to C-terminus: O-methyltransferase hmp5 (398 aa).

Residues 233-234, Glu-261, and 283-284 contribute to the S-adenosyl-L-methionine site; these read GG and DF. His-303 functions as the Proton acceptor in the catalytic mechanism.

Belongs to the class I-like SAM-binding methyltransferase superfamily. Cation-independent O-methyltransferase family.

Its pathway is secondary metabolite biosynthesis. Functionally, O-methyltransferase; part of the gene cluster that mediates the biosynthesis of hypothemycin, a resorcylic acid lactone (RAL) that irreversibly inhibits a subset of protein kinases with a conserved cysteine in the ATP binding site such as human ERK2. The first step is performed by both PKSs hmp3 and hmp8 and leads to the production of 7',8'-dehydrozearalenol (DHZ). The highly reducing PKS hpm8 synthesizes the reduced hexaketide (7S,11S,2E,8E)-7,11-dihydroxy-dodeca-2,8-dienoate, which is transferred downstream to the non-reducing PKS hpm3. Hpm3 then extends the reduced hexaketide to a nonaketide, after which regioselective cyclization and macrolactonization affords DHZ. The next step is the conversion of DHZ into aigialomycin C and is performed by the O-methyltransferase hmp5, the FAD-binding monooxygenase hmp7, and the cytochrome P450 monooxygenase hmp1. The wide substrate tolerance of the hmp5 and hmp7 implies that the reactions from DHZ to aigialomycin C can occur in any order. The steps from aigialomycin C to hypothemycin are less well established. The FAD-linked oxidoreductase hmp9 presumably catalyzes oxidation of the C-6' hydroxyl to a ketone. The timing of this oxidation is important, since the resulting enone functional group is a Michael acceptor that can react spontaneously with glutathione, an abundant metabolite in fungal cells. The glutathione S-transferase hmp2 catalyzes cis-trans isomerization of the 7',8' double bond with equilibrium favoring the trans isomer. The hpm6-encoded transporter might preferentially pump hypothemycin out of the cell relative to the trans isomer aigialomycin A. The cis-to-trans isomerization may be coupled with C-4' hydroxylation, since all known hypothemycin analogs containing the enone functional group also have hydroxyl groups at both C-4' and C-5'. The sequence is that of O-methyltransferase hmp5 from Hypomyces subiculosus (Nectria subiculosa).